The primary structure comprises 205 residues: Outer-membrane lipoprotein LolB (205 aa).

An N-terminal signal peptide occupies residues 1–17; the sequence is MFLRHCITFTLIALLAG. Residue cysteine 18 is the site of N-palmitoyl cysteine attachment. Cysteine 18 carries S-diacylglycerol cysteine lipidation.

The protein belongs to the LolB family. Monomer.

The protein resides in the cell outer membrane. In terms of biological role, plays a critical role in the incorporation of lipoproteins in the outer membrane after they are released by the LolA protein. This is Outer-membrane lipoprotein LolB from Pseudomonas putida (strain GB-1).